Reading from the N-terminus, the 547-residue chain is Inositol 1,4,5-trisphosphate receptor-interacting protein-like 1 (547 aa).

The signal sequence occupies residues 1-22; sequence MAVISLMFLAVMYVVHHPLMVS. The Extracellular portion of the chain corresponds to 23-96; that stretch reads DRMDLDTLAR…PFQAGGQDGG (74 aa). A coiled-coil region spans residues 28-66; that stretch reads DTLARSRQLEKRMSEEMRQLEMEFEERSRAAEQKQKVEN. A helical membrane pass occupies residues 97-117; that stretch reads PLGWILGNLWNAGLFCLFLIF. The Cytoplasmic portion of the chain corresponds to 118–547; the sequence is ELLRQSMQHE…LPCSPVAGGL (430 aa).

The protein belongs to the ITPRIP family.

It localises to the cell membrane. Functionally, functions as a ligand of CD3E, inhibiting TCR-CD3 complex signaling to regulate T cell activation. Induces stable CD3E-NCK1 binding, thereby preventing the CD3E-ZAP70 interaction and subsequently inhibiting the activation of the downstream ERK-NFkB signaling cascade and calcium influx. This is Inositol 1,4,5-trisphosphate receptor-interacting protein-like 1 (Itpripl1) from Mus musculus (Mouse).